Reading from the N-terminus, the 223-residue chain is 26S proteasome non-ATPase regulatory subunit 9 (223 aa).

Over residues 103–121 (RDKEKQARDMAEAHKEAMS) the composition is skewed to basic and acidic residues. The interval 103 to 141 (RDKEKQARDMAEAHKEAMSRKLGQSESQGPPRAFAKVNS) is disordered. Residues 108–195 (QARDMAEAHK…KPLNVTVIRR (88 aa)) enclose the PDZ domain. Residue serine 129 is modified to Phosphoserine.

Belongs to the proteasome subunit p27 family. As to quaternary structure, interacts with PSMC3. Part of a transient complex (modulator) containing PSMD9, PSMC6 and PSMC3 formed during the assembly of the 26S proteasome. Expressed in all tissues tested, highly expressed in liver and kidney.

In terms of biological role, acts as a chaperone during the assembly of the 26S proteasome, specifically of the base subcomplex of the PA700/19S regulatory complex (RC). During the base subcomplex assembly is part of an intermediate PSMD9:PSMC6:PSMC3 module, also known as modulator trimer complex; PSMD9 is released during the further base assembly process. This is 26S proteasome non-ATPase regulatory subunit 9 (PSMD9) from Homo sapiens (Human).